Here is a 168-residue protein sequence, read N- to C-terminus: Skp-like protein (168 aa).

The first 22 residues, M1–A22, serve as a signal peptide directing secretion.

It belongs to the Skp family.

This is Skp-like protein from Pseudomonas aeruginosa (strain ATCC 15692 / DSM 22644 / CIP 104116 / JCM 14847 / LMG 12228 / 1C / PRS 101 / PAO1).